A 293-amino-acid chain; its full sequence is Protein orai (293 aa).

Residues 1 to 122 (MPRSHDPSRV…RAQLKASSRT (122 aa)) lie on the Cytoplasmic side of the membrane. The disordered stretch occupies residues 62 to 81 (STAGGGSRNGVGSKEGSVTS). The chain crosses the membrane as a helical span at residues 123-141 (SALLAGFAMVCLVELQYDQ). Topologically, residues 142–146 (STPKP) are extracellular. Residues 147–167 (LLIVLGVVTSLLVSVHLLALM) form a helical membrane-spanning segment. Residues 168–198 (MSTCILPYMEATGCTQDSPHIKLKFYIDLSW) lie on the Cytoplasmic side of the membrane. Residues 199 to 219 (LFSTCIGLLLFLVEIGVIFYV) form a helical membrane-spanning segment. Residues 220-230 (KFTAVGYPTAG) are Extracellular-facing. A helical membrane pass occupies residues 231–251 (YITTAMLVPVGVVFVVFSYLI). Over 252–293 (HKNRVSHSLGRFKHKVDTMKQFLDVEANLQKSTLAPSTIRDI) the chain is Cytoplasmic.

The protein belongs to the Orai family. Expressed in gonad sheath cells, hypodermis, intestine and spermatheca. Coexpressed with stim-1.

It localises to the membrane. Its function is as follows. Ca(2+) release-activated Ca(2+)-like (CRAC-like) channel subunit which mediates Ca(2+) influx and increase in Ca(2+)-selective current by synergy with the Ca(2+) sensor, stim-1. Required for Ca(2+) and IP3-dependent contractile activity of sheath cells and the spermatheca. Affects brood size and somatic cell function. The polypeptide is Protein orai (orai-1) (Caenorhabditis elegans).